The chain runs to 544 residues: Carboxypeptidase Y homolog A (544 aa).

Positions 1–17 are cleaved as a signal peptide; that stretch reads MKSLALALLVGGAIASG. A propeptide spanning residues 18–124 is cleaved from the precursor; the sequence is PQQQVLREPV…RLDTYDLRVK (107 aa). 5 disulfide bridges follow: C178–C417, C312–C326, C336–C359, C343–C352, and C381–C387. An N-linked (GlcNAc...) asparagine glycan is attached at N209. Residue S265 is part of the active site. D456 is a catalytic residue. N506 carries N-linked (GlcNAc...) asparagine glycosylation. The active site involves H517.

This sequence belongs to the peptidase S10 family.

The protein localises to the vacuole. It carries out the reaction Release of a C-terminal amino acid with broad specificity.. In terms of biological role, vacuolar carboxypeptidase involved in degradation of small peptides. Digests preferentially peptides containing an aliphatic or hydrophobic residue in P1' position, as well as methionine, leucine or phenylalanine in P1 position of ester substrate. The chain is Carboxypeptidase Y homolog A (CPYA) from Ajellomyces capsulatus (strain G186AR / H82 / ATCC MYA-2454 / RMSCC 2432) (Darling's disease fungus).